The following is a 246-amino-acid chain: 14-3-3 protein beta/alpha (246 aa).

Met-1 carries the post-translational modification N-acetylmethionine; in 14-3-3 protein beta/alpha; alternate. Met-1 bears the N-acetylmethionine mark. Thr-2 is modified (N-acetylthreonine; in 14-3-3 protein beta/alpha, N-terminally processed). Thr-2 is modified (phosphothreonine). Position 5 is an N6-acetyllysine (Lys-5). Lys-51 carries the post-translational modification N6-acetyllysine; alternate. Lys-51 participates in a covalent cross-link: Glycyl lysine isopeptide (Lys-Gly) (interchain with G-Cter in SUMO2); alternate. Ser-60 bears the Phosphoserine mark. N6-acetyllysine is present on Lys-70. 2 positions are modified to 3'-nitrotyrosine: Tyr-84 and Tyr-106. Lys-117 is subject to N6-acetyllysine. Phosphoserine is present on residues Ser-186 and Ser-232.

This sequence belongs to the 14-3-3 family. As to quaternary structure, homodimer. Interacts with SAMSN1 and PRKCE. Interacts with AKAP13. Interacts with SSH1 and TORC2/CRTC2. Interacts with ABL1; the interaction results in cytoplasmic location of ABL1 and inhibition of cABL-mediated apoptosis. Interacts with ROR2 (dimer); the interaction results in phosphorylation of YWHAB on tyrosine residues. Interacts with GAB2. Interacts with YAP1 (phosphorylated form). Interacts with the phosphorylated (by AKT1) form of SRPK2. Interacts with PKA-phosphorylated AANAT. Interacts with MYO1C. Interacts with SIRT2. Interacts with the 'Thr-369' phosphorylated form of DAPK2. Interacts with PI4KB, TBC1D22A and TBC1D22B. Interacts with the 'Ser-1134' and 'Ser-1161' phosphorylated form of SOS1. Interacts (via phosphorylated form) with YWHAB; this interaction occurs in a protein kinase AKT1-dependent manner. Interacts with SLITRK1. Interacts with SYNPO2 (phosphorylated form); YWHAB competes with ACTN2 for interaction with SYNPO2. Interacts with RIPOR2 (via phosphorylated form) isoform 2; this interaction occurs in a chemokine-dependent manner and does not compete for binding of RIPOR2 with RHOA nor blocks inhibition of RIPOR2-mediated RHOA activity. Interacts with MARK2 and MARK3. Interacts with TESK1; the interaction is dependent on the phosphorylation of TESK1 'Ser-437' and inhibits TESK1 kinase activity. Interacts with MEFV. Interacts with HDAC4. Interacts with ADAM22 (via C-terminus). In terms of assembly, (Microbial infection) Interacts with herpes simplex virus 1 protein UL46. (Microbial infection) Probably interacts with Chlamydia trachomatis protein IncG. In terms of processing, the alpha, brain-specific form differs from the beta form in being phosphorylated. Phosphorylated on Ser-60 by protein kinase C delta type catalytic subunit in a sphingosine-dependent fashion.

It localises to the cytoplasm. Its subcellular location is the melanosome. The protein resides in the vacuole membrane. Adapter protein implicated in the regulation of a large spectrum of both general and specialized signaling pathways. Binds to a large number of partners, usually by recognition of a phosphoserine or phosphothreonine motif. Binding generally results in the modulation of the activity of the binding partner. Negative regulator of osteogenesis. Blocks the nuclear translocation of the phosphorylated form (by AKT1) of SRPK2 and antagonizes its stimulatory effect on cyclin D1 expression resulting in blockage of neuronal apoptosis elicited by SRPK2. Negative regulator of signaling cascades that mediate activation of MAP kinases via AKAP13. In Homo sapiens (Human), this protein is 14-3-3 protein beta/alpha (YWHAB).